The following is a 55-amino-acid chain: Large ribosomal subunit protein bL33 (55 aa).

It belongs to the bacterial ribosomal protein bL33 family.

The chain is Large ribosomal subunit protein bL33 from Gluconacetobacter diazotrophicus (strain ATCC 49037 / DSM 5601 / CCUG 37298 / CIP 103539 / LMG 7603 / PAl5).